A 1014-amino-acid chain; its full sequence is Isoleucine--tRNA ligase (1014 aa).

The 'HIGH' region motif lies at 48–58; that stretch reads PTANGRPGIHH. The short motif at 628 to 632 is the 'KMSKS' region element; the sequence is KMSKS. Lys-631 contacts ATP.

This sequence belongs to the class-I aminoacyl-tRNA synthetase family. IleS type 2 subfamily. As to quaternary structure, monomer. Zn(2+) serves as cofactor.

The protein resides in the cytoplasm. It carries out the reaction tRNA(Ile) + L-isoleucine + ATP = L-isoleucyl-tRNA(Ile) + AMP + diphosphate. Catalyzes the attachment of isoleucine to tRNA(Ile). As IleRS can inadvertently accommodate and process structurally similar amino acids such as valine, to avoid such errors it has two additional distinct tRNA(Ile)-dependent editing activities. One activity is designated as 'pretransfer' editing and involves the hydrolysis of activated Val-AMP. The other activity is designated 'posttransfer' editing and involves deacylation of mischarged Val-tRNA(Ile). This chain is Isoleucine--tRNA ligase, found in Dehalococcoides mccartyi (strain CBDB1).